Here is a 258-residue protein sequence, read N- to C-terminus: Transmembrane O-methyltransferase homolog (258 aa).

S-adenosyl-L-methionine contacts are provided by residues Glu-104, 106–107 (GT), Ser-112, Glu-130, and Ser-160.

Belongs to the class I-like SAM-binding methyltransferase superfamily. Cation-dependent O-methyltransferase family. Interacts with LHFPL5, PCDH15, TMC1, TMC2 and TMIE. Interacts directly with TMC1. The interaction of TOMT with TMC1 and TMC2 is required for the transportation of TMC1/2 into the stereocilia of hair cells.

The protein resides in the cytoplasm. It localises to the endoplasmic reticulum. The enzyme catalyses a catechol + S-adenosyl-L-methionine = a guaiacol + S-adenosyl-L-homocysteine + H(+). Functionally, catalyzes the O-methylation, and thereby the inactivation, of catecholamine neurotransmitters and catechol hormones. Required for auditory function. Component of the cochlear hair cell's mechanotransduction (MET) machinery. Involved in the assembly of the asymmetric tip-link MET complex. Required for transportation of TMC1 and TMC2 proteins into the mechanically sensitive stereocilia of the hair cells. The function in MET is independent of the enzymatic activity. This Rattus norvegicus (Rat) protein is Transmembrane O-methyltransferase homolog.